Here is a 659-residue protein sequence, read N- to C-terminus: MSVFLAVDHVHQVFDLPGGGQYIALKDVSLNIRPGEFISLIGHSGCGKSTLLNLIAGLAQPSSGGIILEGRQVTEPGPDRMVVFQNYSLLPWRTVRQNIALAVDSVLHDRNRTERRTIIEETIDLVGLRAAADKYPHEISGGMKQRVAIARGLAIRPKLLLLDEPFGALDALTRGNLQEQLMRICQEAGVTAVMVTHDVDEALLLSDRVVMLTNGPAAQIGQILEVDFPRPRQRLEMMETPHYYDLRNELINFLQQQRRAKRRAKAAAPAPAVAASQQKTVRLGFLPGNDCAPLAIAQELGLFQDLGLSVELQSFLTWEALEDSIRLGQLEGALMMAAQPLAMTMGLGGHRPFAIATPLTVSRNGGAIALSRRYLNAGVRSLEDLCQFLAATPQRLRLAIPDPIAMPALLLRYWLASAGLNPEQDVELVGMSPYEMVEALKAGDIDGFAAGEMRIALAVQAGAAYVLATDLDIWAGHPEKVLGLPEAWLQVNPETAIALCSALLKAGELCDDPRQRDRIVEVLQQPQYLGSAAGTVLQRYFDFGLGDEPTQILRFNQFHVDQANYPNPLEGTWLLTQLCRWGLTPLPKNRQELLDRVYRRDIYEAAIAAVGFPLITPSQRGFELFDAVPFDPDSPLRYLEQFEIKAPIQVAPIPLATSA.

One can recognise an ABC transporter domain in the interval 5–239 (LAVDHVHQVF…RPRQRLEMME (235 aa)). Position 42–49 (42–49 (GHSGCGKS)) interacts with ATP. The interval 255–278 (QQQRRAKRRAKAAAPAPAVAASQQ) is linker. The segment at 279–659 (KTVRLGFLPG…VAPIPLATSA (381 aa)) is nrtA-like.

It belongs to the ABC transporter superfamily. Nitrate/nitrite/cyanate uptake transporter (NitT) (TC 3.A.1.16) family. The complex is composed of two ATP-binding proteins (NrtC and NrtD), two transmembrane proteins (NrtB) and a solute-binding protein (NrtA).

It is found in the cell inner membrane. The enzyme catalyses nitrate(out) + ATP + H2O = nitrate(in) + ADP + phosphate + H(+). With respect to regulation, transport is inhibited by ammonium. The C-terminal domain of NrtC is involved in the ammonium-promoted inhibition of the nitrate/nitrite transporter. In terms of biological role, part of the ABC transporter complex NrtABCD involved in nitrate uptake. The complex is probably also involved in nitrite transport. Probably responsible for energy coupling to the transport system. This Synechococcus elongatus (strain ATCC 33912 / PCC 7942 / FACHB-805) (Anacystis nidulans R2) protein is Nitrate import ATP-binding protein NrtC.